The following is a 311-amino-acid chain: Thioredoxin reductase (311 aa).

35–42 (ERGIPGGQ) is a binding site for FAD. The cysteines at positions 134 and 137 are disulfide-linked. 277 to 286 (DVRDKGLRQI) is an FAD binding site.

Belongs to the class-II pyridine nucleotide-disulfide oxidoreductase family. Homodimer. FAD is required as a cofactor.

The protein resides in the cytoplasm. It catalyses the reaction [thioredoxin]-dithiol + NADP(+) = [thioredoxin]-disulfide + NADPH + H(+). This Staphylococcus aureus (strain COL) protein is Thioredoxin reductase (trxB).